The following is an 83-amino-acid chain: Small ribosomal subunit protein eS21 (83 aa).

An N-acetylmethionine modification is found at M1. K41 is covalently cross-linked (Glycyl lysine isopeptide (Lys-Gly) (interchain with G-Cter in SUMO2)). The residue at position 81 (K81) is an N6-acetyllysine.

It belongs to the eukaryotic ribosomal protein eS21 family. As to quaternary structure, component of the 40S small ribosomal subunit.

Its subcellular location is the cytoplasm. The protein resides in the cytosol. It localises to the rough endoplasmic reticulum. In terms of biological role, component of the small ribosomal subunit. The ribosome is a large ribonucleoprotein complex responsible for the synthesis of proteins in the cell. The sequence is that of Small ribosomal subunit protein eS21 (RPS21) from Sus scrofa (Pig).